A 198-amino-acid polypeptide reads, in one-letter code: Glycerol-3-phosphate acyltransferase (198 aa).

The next 5 helical transmembrane spans lie at 2–22 (YAVL…AYIF), 48–70 (LGYK…AVLI), 75–97 (MGNT…PVFL), 111–131 (VVMT…VTVI), and 154–174 (IFWN…LAIF).

Belongs to the PlsY family. In terms of assembly, probably interacts with PlsX.

It localises to the cell membrane. The catalysed reaction is an acyl phosphate + sn-glycerol 3-phosphate = a 1-acyl-sn-glycero-3-phosphate + phosphate. It functions in the pathway lipid metabolism; phospholipid metabolism. Catalyzes the transfer of an acyl group from acyl-phosphate (acyl-PO(4)) to glycerol-3-phosphate (G3P) to form lysophosphatidic acid (LPA). This enzyme utilizes acyl-phosphate as fatty acyl donor, but not acyl-CoA or acyl-ACP. In Thermoanaerobacter sp. (strain X514), this protein is Glycerol-3-phosphate acyltransferase.